The chain runs to 65 residues: Transcriptional regulatory protein SenS (65 aa).

The H-T-H motif DNA-binding region spans 11–31; sequence RFRKRKTYGNQILPLELLIEK.

The protein to B.natto SenN.

Regulates the expression of extracellular-protein genes of Bacillus subtilis. The sequence is that of Transcriptional regulatory protein SenS (senS) from Bacillus subtilis (strain 168).